The primary structure comprises 347 residues: GMP reductase (347 aa).

Residue 108–131 (ADFQKTKDIMALTDDLIFICIDIA) participates in NADP(+) binding. The K(+) site is built by Gly181 and Gly183. The active-site Thioimidate intermediate is Cys186. 216–239 (IIGDGGCSCAGDVSKAFGGGADFV) serves as a coordination point for NADP(+).

This sequence belongs to the IMPDH/GMPR family. GuaC type 1 subfamily. In terms of assembly, homotetramer.

It carries out the reaction IMP + NH4(+) + NADP(+) = GMP + NADPH + 2 H(+). Functionally, catalyzes the irreversible NADPH-dependent deamination of GMP to IMP. It functions in the conversion of nucleobase, nucleoside and nucleotide derivatives of G to A nucleotides, and in maintaining the intracellular balance of A and G nucleotides. This chain is GMP reductase, found in Aliivibrio fischeri (strain ATCC 700601 / ES114) (Vibrio fischeri).